A 151-amino-acid chain; its full sequence is Small ribosomal subunit protein uS15z (151 aa).

The protein belongs to the universal ribosomal protein uS15 family.

The polypeptide is Small ribosomal subunit protein uS15z (RPS13A) (Arabidopsis thaliana (Mouse-ear cress)).